Here is a 255-residue protein sequence, read N- to C-terminus: 5'-nucleotidase SurE (255 aa).

Residues Asp8, Asp9, Ser39, and Asn95 each coordinate a divalent metal cation.

The protein belongs to the SurE nucleotidase family. A divalent metal cation is required as a cofactor.

The protein resides in the cytoplasm. The catalysed reaction is a ribonucleoside 5'-phosphate + H2O = a ribonucleoside + phosphate. Its function is as follows. Nucleotidase that shows phosphatase activity on nucleoside 5'-monophosphates. This is 5'-nucleotidase SurE from Thermosipho africanus (strain TCF52B).